A 227-amino-acid chain; its full sequence is Venom allergen 5 (227 aa).

The signal sequence occupies residues 1–21; that stretch reads MKISCLICLVIVLTIIHLSQA. Disulfide bonds link Cys-25-Cys-37, Cys-29-Cys-125, Cys-49-Cys-117, and Cys-193-Cys-210. The 144-residue stretch at 69-212 folds into the SCP domain; it reads EEHNRFRQKV…MQIHYLICNY (144 aa).

The protein belongs to the CRISP family. Venom allergen 5-like subfamily. As to expression, expressed by the venom gland.

The protein localises to the secreted. The polypeptide is Venom allergen 5 (Polistes dominula (European paper wasp)).